Consider the following 99-residue polypeptide: DNA-binding protein Fis (99 aa).

The segment at residues 75-94 is a DNA-binding region (H-T-H motif); that stretch reads QTRAASIMGINRSTLRKKLK.

It belongs to the transcriptional regulatory Fis family. As to quaternary structure, homodimer.

In terms of biological role, activates ribosomal RNA transcription. Plays a direct role in upstream activation of rRNA promoters. The protein is DNA-binding protein Fis of Buchnera aphidicola subsp. Schizaphis graminum (strain Sg).